The following is a 394-amino-acid chain: Chorismate synthase (394 aa).

NADP(+) is bound by residues Arg-40 and Arg-46. FMN is bound by residues 135–137, 255–256, Gly-302, 317–321, and Arg-343; these read RAS, QA, and KPISS.

The protein belongs to the chorismate synthase family. Homotetramer. FMNH2 is required as a cofactor.

It catalyses the reaction 5-O-(1-carboxyvinyl)-3-phosphoshikimate = chorismate + phosphate. Its pathway is metabolic intermediate biosynthesis; chorismate biosynthesis; chorismate from D-erythrose 4-phosphate and phosphoenolpyruvate: step 7/7. In terms of biological role, catalyzes the anti-1,4-elimination of the C-3 phosphate and the C-6 proR hydrogen from 5-enolpyruvylshikimate-3-phosphate (EPSP) to yield chorismate, which is the branch point compound that serves as the starting substrate for the three terminal pathways of aromatic amino acid biosynthesis. This reaction introduces a second double bond into the aromatic ring system. This chain is Chorismate synthase, found in Parafrankia sp. (strain EAN1pec).